The following is a 425-amino-acid chain: Dihydroorotase (425 aa).

His61 and His63 together coordinate Zn(2+). Residues 63–65 (HLR) and Asn95 each bind substrate. Zn(2+) is bound by residues Asp153, His180, and His233. Residue Asn279 participates in substrate binding. Asp306 provides a ligand contact to Zn(2+). The active site involves Asp306. His310 serves as a coordination point for substrate.

Belongs to the metallo-dependent hydrolases superfamily. DHOase family. Class I DHOase subfamily. Zn(2+) is required as a cofactor.

The catalysed reaction is (S)-dihydroorotate + H2O = N-carbamoyl-L-aspartate + H(+). Its pathway is pyrimidine metabolism; UMP biosynthesis via de novo pathway; (S)-dihydroorotate from bicarbonate: step 3/3. Functionally, catalyzes the reversible cyclization of carbamoyl aspartate to dihydroorotate. In Geobacter sulfurreducens (strain ATCC 51573 / DSM 12127 / PCA), this protein is Dihydroorotase.